We begin with the raw amino-acid sequence, 186 residues long: Ribosome maturation factor RimP (186 aa).

Belongs to the RimP family.

The protein localises to the cytoplasm. In terms of biological role, required for maturation of 30S ribosomal subunits. The chain is Ribosome maturation factor RimP from Novosphingobium aromaticivorans (strain ATCC 700278 / DSM 12444 / CCUG 56034 / CIP 105152 / NBRC 16084 / F199).